Here is a 421-residue protein sequence, read N- to C-terminus: 4-hydroxy-3-methylbut-2-en-1-yl diphosphate synthase (flavodoxin) (421 aa).

[4Fe-4S] cluster contacts are provided by cysteine 311, cysteine 314, cysteine 357, and glutamate 364.

It belongs to the IspG family. The cofactor is [4Fe-4S] cluster.

It catalyses the reaction (2E)-4-hydroxy-3-methylbut-2-enyl diphosphate + oxidized [flavodoxin] + H2O + 2 H(+) = 2-C-methyl-D-erythritol 2,4-cyclic diphosphate + reduced [flavodoxin]. It functions in the pathway isoprenoid biosynthesis; isopentenyl diphosphate biosynthesis via DXP pathway; isopentenyl diphosphate from 1-deoxy-D-xylulose 5-phosphate: step 5/6. In terms of biological role, converts 2C-methyl-D-erythritol 2,4-cyclodiphosphate (ME-2,4cPP) into 1-hydroxy-2-methyl-2-(E)-butenyl 4-diphosphate. This chain is 4-hydroxy-3-methylbut-2-en-1-yl diphosphate synthase (flavodoxin), found in Stenotrophomonas maltophilia (strain K279a).